We begin with the raw amino-acid sequence, 454 residues long: F-box/WD-40 repeat-containing protein At3g52030 (454 aa).

Positions 20 to 66 (PTSIESLDADILCIIFSFLDLFDLVHCTVVCNSWNAVIKRLKLLQAS) constitute an F-box domain. WD repeat units lie at residues 85-116 (DRPAEIDVEDFAMKHHKMALLRGRIEIERWEA), 117-153 (HSHRVSQCRMKKGLLLTGVGDKVMRLWSLKSYKCMEE), 170-214 (SKKL…SIFP), 215-255 (SRAG…CSQI), 258-296 (TQGGPITCLSLSDNQLFLSGSSLGRVTVSDPLMDQPVAT), 301-340 (ITAGGIQTICFNQGTNLAFIGTTGGYVSCWDLRKMDRLWE), 343-383 (VSPN…VLSR), and 422-454 (KVRPQISCIAMGMKKMVTAHNGKCISVWKFNLS).

In Arabidopsis thaliana (Mouse-ear cress), this protein is F-box/WD-40 repeat-containing protein At3g52030.